The sequence spans 547 residues: MMGRPVLVLSQNMKRESGRKVQSGNINAAKTIADIIRTCLGPRAMMKMLLDPMGGIVMTNDGNAILREIQVQHPAAKSMIEISRTQDEEVGDGTTSVIILAGEMLSVAEQFLEQQMHPTVIISAYRKALDDMVNTLKEISTPVDTNDRELMLKIINSAINTKAIKLWADMACGIALDAVKTVELEENGRKEIDIKKYAKVEKIPGGIIEDSCVLRGVMVNKDVTHPKMRRLIKNPRIILLDCSLEYKKGESQTEIEITREEDFARILQMEEEYIQQVCEDIIRLKPDVVITEKGISDLAQHYLVKANITAVRRVRKTDNNRIARACGARIASRTDELREEDVGTGAGLFEIKKIGDEYFTFITDCKDPKACTIVLRGASKEILAEVERNLQDAMQVCRNVVIDPYLVPGGGASEMSVAHILTEKSKTMTGVEQWPYRAVAQALEVIPRTLIQNCGASTIRILTSLRAKHTQEGCQTWGVDGEAGVLADMKELGIWEPLAVKLQTYKTAVETAILLLRIDDIVSGHKKKGEDHGRQPAAAPEAPQQAE.

An ADP-binding site is contributed by glycine 41. Glycine 41 contributes to the ATP binding site. Aspartate 92 lines the Mg(2+) pocket. ADP contacts are provided by glycine 93, threonine 94, threonine 95, serine 96, threonine 161, and lysine 162. ATP contacts are provided by glycine 93, threonine 94, and threonine 95. Cysteine 365 and cysteine 371 are joined by a disulfide. 5 residues coordinate ADP: glycine 410, glycine 481, glutamate 482, glutamate 496, and lysine 501. Residues glycine 410 and glycine 481 each coordinate ATP. Glutamate 496 contacts ATP. A compositionally biased stretch (basic and acidic residues) spans histidine 525–arginine 534. Residues histidine 525–glutamate 547 form a disordered region. Low complexity predominate over residues glutamine 535–glutamate 547.

This sequence belongs to the TCP-1 chaperonin family. As to quaternary structure, component of the chaperonin-containing T-complex (TRiC), a hexadecamer composed of two identical back-to-back stacked rings enclosing a protein folding chamber. Each ring is made up of eight different subunits: TCP1/CCT1, CCT2, CCT3, CCT4, CCT5, CCT6A/CCT6, CCT7, CCT8.

Its subcellular location is the cytoplasm. The catalysed reaction is ATP + H2O = ADP + phosphate + H(+). In terms of biological role, component of the chaperonin-containing T-complex (TRiC), a molecular chaperone complex that assists the folding of actin, tubulin and other proteins upon ATP hydrolysis. This is T-complex protein 1 subunit gamma (cct3) from Xenopus laevis (African clawed frog).